The chain runs to 359 residues: 3-isopropylmalate dehydrogenase (359 aa).

76–89 provides a ligand contact to NAD(+); the sequence is GPKWDTIERSIRPE. Substrate-binding residues include Arg96, Arg106, Arg134, and Asp225. 3 residues coordinate Mg(2+): Asp225, Asp249, and Asp253. 283–295 contacts NAD(+); the sequence is GSAPDIAGQNVAN.

The protein belongs to the isocitrate and isopropylmalate dehydrogenases family. LeuB type 1 subfamily. As to quaternary structure, homodimer. It depends on Mg(2+) as a cofactor. Requires Mn(2+) as cofactor.

Its subcellular location is the cytoplasm. It carries out the reaction (2R,3S)-3-isopropylmalate + NAD(+) = 4-methyl-2-oxopentanoate + CO2 + NADH. Its pathway is amino-acid biosynthesis; L-leucine biosynthesis; L-leucine from 3-methyl-2-oxobutanoate: step 3/4. Functionally, catalyzes the oxidation of 3-carboxy-2-hydroxy-4-methylpentanoate (3-isopropylmalate) to 3-carboxy-4-methyl-2-oxopentanoate. The product decarboxylates to 4-methyl-2 oxopentanoate. The polypeptide is 3-isopropylmalate dehydrogenase (Acinetobacter baylyi (strain ATCC 33305 / BD413 / ADP1)).